A 662-amino-acid chain; its full sequence is Methionine--tRNA ligase (662 aa).

The 'HIGH' region motif lies at Tyr14–Ser24. The 'KMSKS' region motif lies at Lys308–Ser312. Lys311 serves as a coordination point for ATP. The 104-residue stretch at Asp559 to Gly662 folds into the tRNA-binding domain.

Belongs to the class-I aminoacyl-tRNA synthetase family. MetG type 2B subfamily. As to quaternary structure, homodimer.

Its subcellular location is the cytoplasm. The enzyme catalyses tRNA(Met) + L-methionine + ATP = L-methionyl-tRNA(Met) + AMP + diphosphate. Its function is as follows. Is required not only for elongation of protein synthesis but also for the initiation of all mRNA translation through initiator tRNA(fMet) aminoacylation. The sequence is that of Methionine--tRNA ligase (metG) from Lactococcus lactis subsp. lactis (strain IL1403) (Streptococcus lactis).